A 206-amino-acid chain; its full sequence is Large ribosomal subunit protein uL4 (206 aa).

The protein belongs to the universal ribosomal protein uL4 family. In terms of assembly, part of the 50S ribosomal subunit.

In terms of biological role, one of the primary rRNA binding proteins, this protein initially binds near the 5'-end of the 23S rRNA. It is important during the early stages of 50S assembly. It makes multiple contacts with different domains of the 23S rRNA in the assembled 50S subunit and ribosome. Functionally, forms part of the polypeptide exit tunnel. This chain is Large ribosomal subunit protein uL4, found in Methylocella silvestris (strain DSM 15510 / CIP 108128 / LMG 27833 / NCIMB 13906 / BL2).